A 351-amino-acid polypeptide reads, in one-letter code: Anaerobic nitrite reductase Glb1-2 (351 aa).

Globin domains are found at residues 13–162 (DFTE…VEMK) and 184–333 (CFTE…AEMK). Heme b is bound by residues serine 56, lysine 70, histidine 74, lysine 104, threonine 108, histidine 109, serine 227, lysine 241, histidine 245, lysine 275, threonine 279, and histidine 280. Residues 331–351 (EMKKTDHDHQTNVEDKSKPSS) form a disordered region.

It belongs to the plant globin family. In terms of assembly, monomer. Heme b serves as cofactor. In terms of tissue distribution, predominantly expressed in nodules and roots, and, to a lesser extent, in leaves, at low levels in pods, but barely in stems, petioles, buds and flowers. As to expression, mainly expressed in nodules and roots at low levels, and barely in leaves. Expressed at very low levels in nodules, roots and pods.

It is found in the cytoplasm. It localises to the nucleus. It carries out the reaction Fe(III)-heme b-[protein] + nitric oxide + H2O = Fe(II)-heme b-[protein] + nitrite + 2 H(+). Phytoglobin that regulates the fine tuning of nitric oxide (NO) concentration in the cytosol in response to sudden changes in O(2) availability, and performs both symbiotic and nonsymbiotic functions. Exhibits NO dioxygenase activity in the presence of O(2) but nitrite reductase (NiR) activity in the absence of O(2) (e.g. during flooding or in waterlogged soil). May not function as an oxygen storage or transport protein. Extremely reactive toward the physiological ligands O(2), nitric oxide (NO), and nitrite with a very high affinity for O(2) through an hexacoordinate heme iron because of a very low dissociation constant. In terms of biological role, very high affinity for O(2) through two hexacoordinate heme irons. Extremely reactive toward the physiological ligands O(2), nitric oxide (NO), and nitrite. Its function is as follows. Very high affinity for O(2) through a single hexacoordinate heme iron. Extremely reactive toward the physiological ligands O(2), nitric oxide (NO), and nitrite. The chain is Anaerobic nitrite reductase Glb1-2 from Medicago truncatula (Barrel medic).